The primary structure comprises 101 residues: NAD(P)H-quinone oxidoreductase subunit 4L, chloroplastic (101 aa).

The next 2 membrane-spanning stretches (helical) occupy residues 2–22 (MFEHVLVLSVYLFSIGIYGLI) and 61–81 (IFSIFVIAVAAAEAAIGLAIV).

The protein belongs to the complex I subunit 4L family. NDH is composed of at least 16 different subunits, 5 of which are encoded in the nucleus.

It is found in the plastid. Its subcellular location is the chloroplast thylakoid membrane. The catalysed reaction is a plastoquinone + NADH + (n+1) H(+)(in) = a plastoquinol + NAD(+) + n H(+)(out). The enzyme catalyses a plastoquinone + NADPH + (n+1) H(+)(in) = a plastoquinol + NADP(+) + n H(+)(out). In terms of biological role, NDH shuttles electrons from NAD(P)H:plastoquinone, via FMN and iron-sulfur (Fe-S) centers, to quinones in the photosynthetic chain and possibly in a chloroplast respiratory chain. The immediate electron acceptor for the enzyme in this species is believed to be plastoquinone. Couples the redox reaction to proton translocation, and thus conserves the redox energy in a proton gradient. This Dioscorea elephantipes (Elephant's foot yam) protein is NAD(P)H-quinone oxidoreductase subunit 4L, chloroplastic.